We begin with the raw amino-acid sequence, 1400 residues long: DNA-directed RNA polymerase subunit beta' (1400 aa).

The Zn(2+) site is built by Cys-71, Cys-73, Cys-86, and Cys-89. Asp-462, Asp-464, and Asp-466 together coordinate Mg(2+). Residues Cys-820, Cys-893, Cys-900, and Cys-903 each coordinate Zn(2+).

It belongs to the RNA polymerase beta' chain family. The RNAP catalytic core consists of 2 alpha, 1 beta, 1 beta' and 1 omega subunit. When a sigma factor is associated with the core the holoenzyme is formed, which can initiate transcription. The cofactor is Mg(2+). Zn(2+) serves as cofactor.

The catalysed reaction is RNA(n) + a ribonucleoside 5'-triphosphate = RNA(n+1) + diphosphate. In terms of biological role, DNA-dependent RNA polymerase catalyzes the transcription of DNA into RNA using the four ribonucleoside triphosphates as substrates. This chain is DNA-directed RNA polymerase subunit beta', found in Methylobacterium sp. (strain 4-46).